Consider the following 446-residue polypeptide: MRLVTLLSGLVSLVSVFGLELDLDDYASLQNATALVAYGLMDYYTGDQYGKTVGMFSDPYYWWQAGGAWGCMLDYWYFMQNDTYNDKIMAALLHQTGDNNDYVPLNQSTTEGNDDQAFWGIAVMQAAERKFPNPPDDKPQWLYLTQAVFNTMALRWDSETCGGGLRWQIFVWNSGYDYKNTVSNGALFHIAARLARYTGNQSYVDWAERVYDWMEDVHLIDNGTYRYVYDGVSINDNCTTVTKYQWTYNQGLMLSGSAYLFNMTGSDLWHERTHAFLNASRVFFNNSILYEAACQGPNTCNTDQRSFKAYFARFLGSTAELVPETRQQIMTWLNTSALAAAKSCSGGTDGHTCGLNWFRDDWDGMYGLGEQMAALEVMVNTQALKRAPPYNATNGGNSTGDGAAGTKPHPTNLAPLHITGGSRAGAGIITAIIGISIIACALWLVY.

The first 18 residues, 1 to 18, serve as a signal peptide directing secretion; it reads MRLVTLLSGLVSLVSVFG. N-linked (GlcNAc...) asparagine glycosylation is found at asparagine 31, asparagine 81, asparagine 106, asparagine 200, asparagine 222, asparagine 237, asparagine 262, asparagine 278, asparagine 285, asparagine 334, asparagine 391, and asparagine 397. The segment at 389–408 is disordered; it reads PYNATNGGNSTGDGAAGTKP. A lipid anchor (GPI-anchor amidated serine) is attached at serine 422. A propeptide spans 423-446 (removed in mature form); that stretch reads RAGAGIITAIIGISIIACALWLVY.

The protein belongs to the glycosyl hydrolase 76 family.

Its subcellular location is the secreted. The protein localises to the cell wall. The protein resides in the cell membrane. It catalyses the reaction Random hydrolysis of (1-&gt;6)-alpha-D-mannosidic linkages in unbranched (1-&gt;6)-mannans.. Functionally, required for normal synthesis of the cell wall. The sequence is that of Mannan endo-1,6-alpha-mannosidase DCW1 (DCW1) from Candida glabrata (strain ATCC 2001 / BCRC 20586 / JCM 3761 / NBRC 0622 / NRRL Y-65 / CBS 138) (Yeast).